Here is a 150-residue protein sequence, read N- to C-terminus: Large ribosomal subunit protein uL15 (150 aa).

Residues 1–15 (MNLSNLQPAEGSTHN) show a composition bias toward polar residues. The segment at 1-52 (MNLSNLQPAEGSTHNQNKRLGRGEGSGKGGTSARGHKGAKSRSGYSKKIGFE) is disordered. Over residues 23-32 (GEGSGKGGTS) the composition is skewed to gly residues.

This sequence belongs to the universal ribosomal protein uL15 family. In terms of assembly, part of the 50S ribosomal subunit.

Binds to the 23S rRNA. The chain is Large ribosomal subunit protein uL15 from Flavobacterium psychrophilum (strain ATCC 49511 / DSM 21280 / CIP 103535 / JIP02/86).